A 274-amino-acid chain; its full sequence is MSLQETIIQELGVKPVIDAQEEIRRSIDFLKRYLKKHPFLKTFVLGISGGQDSTLAGRLAQLAMEELRAETGDDSYKFIAVRLPYGVQADEADAQKALAFIQPDVSLVVNIKESADAMTAAVEATGSPVSDFNKGNIKARCRMIAQYALAGSHSGAVIGTDHAAENITGFFTKFGDGGADILPLYRLNKRQGKQLLQKLGAEPALYEKIPTADLEEDKPGLADEVALGVTYAEIDDYLEGKTISPEAQATIENWWHKGQHKRHLPITVFDDFWE.

Gly46–Ser53 contacts ATP. Asp52 is a Mg(2+) binding site. Arg140 is a binding site for deamido-NAD(+). An ATP-binding site is contributed by Thr160. Residue Glu165 participates in Mg(2+) binding. Lys173 and Asp180 together coordinate deamido-NAD(+). 2 residues coordinate ATP: Lys189 and Thr211. A deamido-NAD(+)-binding site is contributed by His260–Lys261.

This sequence belongs to the NAD synthetase family. Homodimer.

It carries out the reaction deamido-NAD(+) + NH4(+) + ATP = AMP + diphosphate + NAD(+) + H(+). The protein operates within cofactor biosynthesis; NAD(+) biosynthesis; NAD(+) from deamido-NAD(+) (ammonia route): step 1/1. Functionally, catalyzes the ATP-dependent amidation of deamido-NAD to form NAD. Uses ammonia as a nitrogen source. The chain is NH(3)-dependent NAD(+) synthetase from Streptococcus pneumoniae serotype 2 (strain D39 / NCTC 7466).